Consider the following 268-residue polypeptide: Lipase (268 aa).

The N-terminal stretch at 1–34 (MRLSRRAATASALLLTPALALFGASAAVSAPRIQ) is a signal peptide. Residue Ser44 is the Nucleophile of the active site. Cystine bridges form between Cys61-Cys86, Cys127-Cys135, and Cys185-Cys232. Residue His250 is part of the active site.

As to quaternary structure, monomer.

The protein localises to the secreted. The enzyme catalyses a triacylglycerol + H2O = a diacylglycerol + a fatty acid + H(+). It catalyses the reaction hexadecanoyl-CoA + H2O = hexadecanoate + CoA + H(+). With respect to regulation, inhibited by 3,4-dichloroisocoumarin and tetrahydrolipstatin in the absence of substrate, but by phenylmethylsulfonyl fluoride (PMSF) only in the presence of substrate. Several water-miscible solvents enhance the lipase hydrolytic activity in vitro. Tetrahydrofuran and N,N-dimethylformamide (both 50%) inactivate the enzyme with t1/2 of 5 minutes and t1/2 of 2 hours, respectively. Functionally, catalyzes the hydrolysis of p-nitrophenyl esters, alpha- and beta-naphthyl esters, and triacylglycerols, with a preference for medium acyl chain length (C8-C12). Shows a much higher hydrolysis rate of glycerol esters of unsaturated C16 and C18 fatty acids than that of their saturated counterparts, and a preference for cis double bond. Is also able to hydrolyze several natural oils and Tween detergents. Also displays thioesterase and phospholipase activities, towards palmitoyl-coenzyme A and diheptanoyl glycerophosphocholine, respectively. Shows transesterification activity of racemic 1-phenyl ethanol with vinyl acetate in hexane, proceeding with partial (R)-enantioselectivity. The sequence is that of Lipase from Streptomyces rimosus.